Reading from the N-terminus, the 109-residue chain is Large ribosomal subunit protein eL30 (109 aa).

The protein belongs to the eukaryotic ribosomal protein eL30 family.

In Methanopyrus kandleri (strain AV19 / DSM 6324 / JCM 9639 / NBRC 100938), this protein is Large ribosomal subunit protein eL30.